The primary structure comprises 389 residues: Succinate--CoA ligase [ADP-forming] subunit beta (389 aa).

In terms of domain architecture, ATP-grasp spans arginine 9–lysine 236. ATP contacts are provided by residues lysine 45, glycine 52 to glycine 54, alanine 94, and glutamate 99. The Mg(2+) site is built by asparagine 191 and aspartate 205. Substrate contacts are provided by residues asparagine 256 and glycine 318–threonine 320.

The protein belongs to the succinate/malate CoA ligase beta subunit family. In terms of assembly, heterotetramer of two alpha and two beta subunits. Mg(2+) serves as cofactor.

The catalysed reaction is succinate + ATP + CoA = succinyl-CoA + ADP + phosphate. It carries out the reaction GTP + succinate + CoA = succinyl-CoA + GDP + phosphate. Its pathway is carbohydrate metabolism; tricarboxylic acid cycle; succinate from succinyl-CoA (ligase route): step 1/1. Its function is as follows. Succinyl-CoA synthetase functions in the citric acid cycle (TCA), coupling the hydrolysis of succinyl-CoA to the synthesis of either ATP or GTP and thus represents the only step of substrate-level phosphorylation in the TCA. The beta subunit provides nucleotide specificity of the enzyme and binds the substrate succinate, while the binding sites for coenzyme A and phosphate are found in the alpha subunit. The sequence is that of Succinate--CoA ligase [ADP-forming] subunit beta from Pseudarthrobacter chlorophenolicus (strain ATCC 700700 / DSM 12829 / CIP 107037 / JCM 12360 / KCTC 9906 / NCIMB 13794 / A6) (Arthrobacter chlorophenolicus).